The chain runs to 351 residues: Probable aldo-keto reductase 2 (351 aa).

Residue Y67 is the Proton donor of the active site. H134 contacts substrate. S213–G223 lines the NADP(+) pocket. The disordered stretch occupies residues Y317–Q351. A compositionally biased stretch (polar residues) spans M332–Q351.

Belongs to the aldo/keto reductase family.

In Oryza sativa subsp. japonica (Rice), this protein is Probable aldo-keto reductase 2.